The sequence spans 131 residues: Large ribosomal subunit protein bL21 (131 aa).

It belongs to the bacterial ribosomal protein bL21 family. In terms of assembly, part of the 50S ribosomal subunit. Contacts protein L20.

This protein binds to 23S rRNA in the presence of protein L20. In Cereibacter sphaeroides (strain ATCC 17023 / DSM 158 / JCM 6121 / CCUG 31486 / LMG 2827 / NBRC 12203 / NCIMB 8253 / ATH 2.4.1.) (Rhodobacter sphaeroides), this protein is Large ribosomal subunit protein bL21.